Reading from the N-terminus, the 941-residue chain is Glycine dehydrogenase (decarboxylating) (941 aa).

Position 692 is an N6-(pyridoxal phosphate)lysine (lysine 692).

It belongs to the GcvP family. In terms of assembly, the glycine cleavage system is composed of four proteins: P, T, L and H. Requires pyridoxal 5'-phosphate as cofactor.

It carries out the reaction N(6)-[(R)-lipoyl]-L-lysyl-[glycine-cleavage complex H protein] + glycine + H(+) = N(6)-[(R)-S(8)-aminomethyldihydrolipoyl]-L-lysyl-[glycine-cleavage complex H protein] + CO2. Functionally, the glycine cleavage system catalyzes the degradation of glycine. The P protein binds the alpha-amino group of glycine through its pyridoxal phosphate cofactor; CO(2) is released and the remaining methylamine moiety is then transferred to the lipoamide cofactor of the H protein. The chain is Glycine dehydrogenase (decarboxylating) from Mycobacterium avium (strain 104).